The following is a 485-amino-acid chain: Protein DETOXIFICATION 8 (485 aa).

The disordered stretch occupies residues 1–26 (MENGFSLVPKEEEEEEDYSNEKSEDQ). Helical transmembrane passes span 41–61 (FMAAPMVAVAASQYLLQVISI), 74–94 (AVAIATSLTNVTGFSLIFGLA), 118–138 (YGSMLCLLLVCFPISLLWVFM), 159–179 (SIWLIPALFGYSVLQSMTRFF), 188–208 (LFLSSLGALFFHVPFSWLLVY), 212–232 (FGIVGAALSIGFSYWLNVGLL), 263–283 (LAIPTAMMTCLEWWSFELLIL), 297–317 (VLSICLTMSSLHYVIVNAIGA), 338–358 (AANSAIFLGMIDAAIVSISLY), 381–401 (ITPFLCLSIGVDSFLAVLSGV), 414–434 (ANIGSYYLVGIPVGSILCFVV), and 442–462 (WIGILVGSTLQTIVLALVTFF).

It belongs to the multi antimicrobial extrusion (MATE) (TC 2.A.66.1) family.

Its subcellular location is the membrane. The protein is Protein DETOXIFICATION 8 of Arabidopsis thaliana (Mouse-ear cress).